The sequence spans 140 residues: 3-hydroxyacyl-[acyl-carrier-protein] dehydratase FabZ (140 aa).

His-47 is a catalytic residue.

Belongs to the thioester dehydratase family. FabZ subfamily.

The protein localises to the cytoplasm. The enzyme catalyses a (3R)-hydroxyacyl-[ACP] = a (2E)-enoyl-[ACP] + H2O. Its function is as follows. Involved in unsaturated fatty acids biosynthesis. Catalyzes the dehydration of short chain beta-hydroxyacyl-ACPs and long chain saturated and unsaturated beta-hydroxyacyl-ACPs. The sequence is that of 3-hydroxyacyl-[acyl-carrier-protein] dehydratase FabZ from Streptococcus gordonii (strain Challis / ATCC 35105 / BCRC 15272 / CH1 / DL1 / V288).